A 468-amino-acid polypeptide reads, in one-letter code: Eukaryotic translation initiation factor 3 subunit M (468 aa).

Residues 42–61 are disordered; it reads PLIEPLRQQEQSEEEPDRKQ. Residues 206-377 form the PCI domain; it reads DLELAQTHVV…SEFLVHRATY (172 aa). Residues 418-468 form a disordered region; it reads MQAAAEETGQGKSGDKGAKGGDRRRNPQQQQQSQPSQPQQAREVELVGGAE. The segment covering 430-442 has biased composition (basic and acidic residues); that stretch reads SGDKGAKGGDRRR. Low complexity predominate over residues 444-457; the sequence is PQQQQQSQPSQPQQ.

The protein belongs to the eIF-3 subunit M family. Component of the eukaryotic translation initiation factor 3 (eIF-3) complex.

It is found in the cytoplasm. Its function is as follows. Component of the eukaryotic translation initiation factor 3 (eIF-3) complex, which is involved in protein synthesis of a specialized repertoire of mRNAs and, together with other initiation factors, stimulates binding of mRNA and methionyl-tRNAi to the 40S ribosome. The eIF-3 complex specifically targets and initiates translation of a subset of mRNAs involved in cell proliferation. The sequence is that of Eukaryotic translation initiation factor 3 subunit M from Neosartorya fischeri (strain ATCC 1020 / DSM 3700 / CBS 544.65 / FGSC A1164 / JCM 1740 / NRRL 181 / WB 181) (Aspergillus fischerianus).